The sequence spans 352 residues: C-C chemokine receptor type 5 (352 aa).

Residues 1–30 (MDYQTSTPLYDIDYGMSEPCQKLNVRQIAA) are Extracellular-facing. At tyrosine 3 the chain carries Sulfotyrosine. O-linked (GalNAc...) serine glycosylation occurs at serine 6. Residues tyrosine 10 and tyrosine 14 each carry the sulfotyrosine modification. 2 disulfide bridges follow: cysteine 20/cysteine 269 and cysteine 101/cysteine 178. The chain crosses the membrane as a helical span at residues 31–58 (RLLPPLYSLVFIFGFVGNMLVVLILINC). The Cytoplasmic segment spans residues 59-68 (KKLKSMTDIY). A helical transmembrane segment spans residues 69–89 (LLNLAISDLLFIITIPFWAHY). Over 90–102 (AADQWVFGNTMCQ) the chain is Extracellular. Residues 103–124 (LFTGFYFIGYFGGIFFIILLTI) form a helical membrane-spanning segment. Topologically, residues 125–141 (DRYLAIVHAVFALKART) are cytoplasmic. A helical membrane pass occupies residues 142-166 (VTFGAATSVVTWVVAVFASLPGIIF). Residues 167–198 (TKSQKEGSRHTCSPHFPSSQYHFWKNFQTLKI) are Extracellular-facing. The chain crosses the membrane as a helical span at residues 199-218 (VILGLVLPLLVMIVCYSGII). The Cytoplasmic segment spans residues 219–235 (KTLLRCRNEKKKHKAVR). Residues 236 to 260 (LIFVIMIVYFLFWAPYNIVLLLSTF) form a helical membrane-spanning segment. Topologically, residues 261-277 (QEFFGLNNCSGSNRLDQ) are extracellular. A helical transmembrane segment spans residues 278 to 301 (AMQVTETLGMTHCCINPIIYAFVG). Residues 302–352 (EKFRNYLLRFFRKYFASRFCKGCPVFQGEAPERVSSVYTRSTGEQEISVGL) are Cytoplasmic-facing. Residues cysteine 321 and cysteine 324 are each lipidated (S-palmitoyl cysteine). A phosphoserine; by BARK1 mark is found at serine 336, serine 337, serine 342, and serine 349.

Belongs to the G-protein coupled receptor 1 family. In terms of assembly, interacts with PRAF2. Efficient ligand binding to CCL3/MIP-1alpha and CCL4/MIP-1beta requires sulfation, O-glycosylation and sialic acid modifications. Glycosylation on Ser-6 is required for efficient binding of CCL4. Interacts with GRK2. Interacts with ARRB1 and ARRB2. Interacts with CNIH4. Interacts with S100A4; this interaction stimulates T-lymphocyte chemotaxis. Sulfated on at least 2 of the N-terminal tyrosines. Sulfation is required for efficient binding of the chemokines, CCL3 and CCL4. Post-translationally, O-glycosylated, but not N-glycosylated. Ser-6 appears to be the major site. Also sialylated glycans present which contribute to chemokine binding. Ser-17 may also be glycosylated and, if so, with small moieties such as a T-antigen. In terms of processing, palmitoylation in the C-terminal is important for cell surface expression. Phosphorylation on serine residues in the C-terminal is stimulated by binding CC chemokines especially by APO-RANTES.

It localises to the cell membrane. Its function is as follows. Receptor for a number of inflammatory CC-chemokines including CCL3/MIP-1-alpha, CCL4/MIP-1-beta and RANTES and subsequently transduces a signal by increasing the intracellular calcium ion level. May play a role in the control of granulocytic lineage proliferation or differentiation. Participates in T-lymphocyte migration to the infection site by acting as a chemotactic receptor. This is C-C chemokine receptor type 5 (CCR5) from Bos taurus (Bovine).